Reading from the N-terminus, the 131-residue chain is Large ribosomal subunit protein bL19 (131 aa).

Residues 107–131 (GKSARIAERAERGSDKGKAAPAAAE) are disordered. A compositionally biased stretch (basic and acidic residues) spans 111–124 (RIAERAERGSDKGK).

Belongs to the bacterial ribosomal protein bL19 family.

Its function is as follows. This protein is located at the 30S-50S ribosomal subunit interface and may play a role in the structure and function of the aminoacyl-tRNA binding site. The protein is Large ribosomal subunit protein bL19 of Methylobacterium sp. (strain 4-46).